The following is a 137-amino-acid chain: Ciliary microtubule inner protein 1 (137 aa).

As to expression, expressed in airway epithelial cells, renal tubular cells, pancreatic acinar cells and epithelial cells of the stomach, duodenum, and gallbladder (at protein level).

The protein resides in the cell projection. The protein localises to the cilium. This Homo sapiens (Human) protein is Ciliary microtubule inner protein 1.